The following is a 1372-amino-acid chain: DNA-directed RNA polymerase subunit beta' (1372 aa).

Cysteine 69, cysteine 71, cysteine 84, and cysteine 87 together coordinate Zn(2+). Residues aspartate 460, aspartate 462, and aspartate 464 each contribute to the Mg(2+) site. 4 residues coordinate Zn(2+): cysteine 808, cysteine 882, cysteine 889, and cysteine 892.

Belongs to the RNA polymerase beta' chain family. The RNAP catalytic core consists of 2 alpha, 1 beta, 1 beta' and 1 omega subunit. When a sigma factor is associated with the core the holoenzyme is formed, which can initiate transcription. Requires Mg(2+) as cofactor. Zn(2+) is required as a cofactor.

It carries out the reaction RNA(n) + a ribonucleoside 5'-triphosphate = RNA(n+1) + diphosphate. Functionally, DNA-dependent RNA polymerase catalyzes the transcription of DNA into RNA using the four ribonucleoside triphosphates as substrates. This is DNA-directed RNA polymerase subunit beta' from Rickettsia prowazekii (strain Madrid E).